A 198-amino-acid chain; its full sequence is Peroxiredoxin-2 (198 aa).

Residue Ala-2 is modified to N-acetylalanine. One can recognise a Thioredoxin domain in the interval 6–164 (AHIGKPAPDF…ALRLVQAFQY (159 aa)). Catalysis depends on Cys-51, which acts as the Cysteine sulfenic acid (-SOH) intermediate. At Ser-112 the chain carries Phosphoserine. Thr-182 is modified (phosphothreonine). Position 196 is an N6-acetyllysine (Lys-196).

The protein belongs to the peroxiredoxin family. AhpC/Prx1 subfamily. In terms of assembly, homodimer; disulfide-linked, upon oxidation. 5 homodimers assemble to form a ring-like decamer. Interacts with TIPIN. Post-translationally, the enzyme can be inactivated by further oxidation of the cysteine sulfenic acid (C(P)-SOH) to sulphinic acid (C(P)-SO2H) instead of its condensation to a disulfide bond. It can be reactivated by forming a transient disulfide bond with sulfiredoxin SRXN1, which reduces the cysteine sulfinic acid in an ATP- and Mg-dependent manner. In terms of processing, acetylation increases resistance to transition to high molecular-mass complexes. Deacetylated by HDAC6 which decreases reducing activity.

Its subcellular location is the cytoplasm. It catalyses the reaction a hydroperoxide + [thioredoxin]-dithiol = an alcohol + [thioredoxin]-disulfide + H2O. In terms of biological role, thiol-specific peroxidase that catalyzes the reduction of hydrogen peroxide and organic hydroperoxides to water and alcohols, respectively. Plays a role in cell protection against oxidative stress by detoxifying peroxides and as sensor of hydrogen peroxide-mediated signaling events. Might participate in the signaling cascades of growth factors and tumor necrosis factor-alpha by regulating the intracellular concentrations of H(2)O(2). This chain is Peroxiredoxin-2 (PRDX2), found in Cricetulus griseus (Chinese hamster).